Consider the following 357-residue polypeptide: Phospho-N-acetylmuramoyl-pentapeptide-transferase (357 aa).

Helical transmembrane passes span Ala-23–Tyr-43, Thr-70–Leu-90, Ser-91–Ile-111, Leu-127–Ile-147, Tyr-171–Thr-191, Gly-196–Ser-216, Leu-236–Tyr-256, Val-260–Leu-280, Leu-286–Ile-306, and Leu-334–Leu-354.

Belongs to the glycosyltransferase 4 family. MraY subfamily. Mg(2+) serves as cofactor.

Its subcellular location is the cell inner membrane. It catalyses the reaction UDP-N-acetyl-alpha-D-muramoyl-L-alanyl-gamma-D-glutamyl-meso-2,6-diaminopimeloyl-D-alanyl-D-alanine + di-trans,octa-cis-undecaprenyl phosphate = di-trans,octa-cis-undecaprenyl diphospho-N-acetyl-alpha-D-muramoyl-L-alanyl-D-glutamyl-meso-2,6-diaminopimeloyl-D-alanyl-D-alanine + UMP. It functions in the pathway cell wall biogenesis; peptidoglycan biosynthesis. Its function is as follows. Catalyzes the initial step of the lipid cycle reactions in the biosynthesis of the cell wall peptidoglycan: transfers peptidoglycan precursor phospho-MurNAc-pentapeptide from UDP-MurNAc-pentapeptide onto the lipid carrier undecaprenyl phosphate, yielding undecaprenyl-pyrophosphoryl-MurNAc-pentapeptide, known as lipid I. This chain is Phospho-N-acetylmuramoyl-pentapeptide-transferase, found in Buchnera aphidicola subsp. Acyrthosiphon pisum (strain 5A).